The following is a 319-amino-acid chain: NADH-quinone oxidoreductase subunit H 1 (319 aa).

The next 9 membrane-spanning stretches (helical) occupy residues 1–21, 77–97, 107–127, 147–167, 179–199, 214–234, 238–258, 262–282, and 293–313; these read MIGLIITAIISAVLIMALLVV, ILAPAIAATPVLAGFGVVAFG, VGVLFLLGMMGLTAYAAMLGA, LAYEVFLGLSLMGAVMLAGSL, VWFVVLQPLGAALFCIAGVAA, LVAGFITEYTGMSFGLFFLGE, VLLVSALAVTLFFGGWLGPWL, IWFGLKTAVIAVVFVWLRATL, and FAWKIALPLSLLNLLLTGIVV.

It belongs to the complex I subunit 1 family. In terms of assembly, NDH-1 is composed of 14 different subunits. Subunits NuoA, H, J, K, L, M, N constitute the membrane sector of the complex.

Its subcellular location is the cell inner membrane. The catalysed reaction is a quinone + NADH + 5 H(+)(in) = a quinol + NAD(+) + 4 H(+)(out). In terms of biological role, NDH-1 shuttles electrons from NADH, via FMN and iron-sulfur (Fe-S) centers, to quinones in the respiratory chain. The immediate electron acceptor for the enzyme in this species is believed to be ubiquinone. Couples the redox reaction to proton translocation (for every two electrons transferred, four hydrogen ions are translocated across the cytoplasmic membrane), and thus conserves the redox energy in a proton gradient. This subunit may bind ubiquinone. The protein is NADH-quinone oxidoreductase subunit H 1 of Rhodopseudomonas palustris (strain HaA2).